Reading from the N-terminus, the 122-residue chain is Small ribosomal subunit protein uS13 (122 aa).

The tract at residues 97-122 is disordered; sequence PVRGQRTKTNARTRKGPARTVAGKKK.

Belongs to the universal ribosomal protein uS13 family. As to quaternary structure, part of the 30S ribosomal subunit. Forms a loose heterodimer with protein S19. Forms two bridges to the 50S subunit in the 70S ribosome.

Located at the top of the head of the 30S subunit, it contacts several helices of the 16S rRNA. In the 70S ribosome it contacts the 23S rRNA (bridge B1a) and protein L5 of the 50S subunit (bridge B1b), connecting the 2 subunits; these bridges are implicated in subunit movement. Contacts the tRNAs in the A and P-sites. This Geobacter metallireducens (strain ATCC 53774 / DSM 7210 / GS-15) protein is Small ribosomal subunit protein uS13.